Consider the following 606-residue polypeptide: Serine/threonine-protein kinase A-Raf (606 aa).

The RBD domain occupies 19–91 (GTVKVYLPNK…DGEELIVEVL (73 aa)). A Phorbol-ester/DAG-type zinc finger spans residues 98–144 (MHNFVRKTFFSLAFCDFCLKFLFHGFRCQTCGYKFHQHCSSKVPTVC). Zn(2+)-binding residues include His-99, Cys-112, Cys-115, Cys-125, Cys-128, His-133, Cys-136, and Cys-144. 2 positions are modified to phosphoserine: Ser-157 and Ser-162. 2 disordered regions span residues 158-207 (VQDL…NAPL) and 241-290 (TDAA…DKKK). Thr-181 bears the Phosphothreonine mark. Residues Ser-186, Ser-257, and Ser-269 each carry the phosphoserine modification. Residues 254–267 (PRGSPSPASVSSGR) are compositionally biased toward low complexity. The span at 274-289 (SPSEQRERKSLADDKK) shows a compositional bias: basic and acidic residues. Residues 310 to 570 (VQLLKRIGTG…PQILATIELL (261 aa)) enclose the Protein kinase domain. Residues 316–324 (IGTGSFGTV) and Lys-336 contribute to the ATP site. At Thr-318 the chain carries Phosphothreonine. The active-site Proton acceptor is the Asp-429.

This sequence belongs to the protein kinase superfamily. TKL Ser/Thr protein kinase family. RAF subfamily. As to quaternary structure, interacts with TH1L/NELFD. Requires Zn(2+) as cofactor. In terms of processing, dephosphorylation by the SHOC2-MRAS-PP1c (SMP) complex consisting of SHOC2, GTP-bound M-Ras/MRAS and the catalytic subunit of protein phosphatase 1 (PPP1CA, PPP1CB or PPP1CC); this relieves inactivation and stimulates kinase activity.

It carries out the reaction L-seryl-[protein] + ATP = O-phospho-L-seryl-[protein] + ADP + H(+). The catalysed reaction is L-threonyl-[protein] + ATP = O-phospho-L-threonyl-[protein] + ADP + H(+). Involved in the transduction of mitogenic signals from the cell membrane to the nucleus. May also regulate the TOR signaling cascade. Phosphorylates PFKFB2. This is Serine/threonine-protein kinase A-Raf (ARAF) from Sus scrofa (Pig).